Consider the following 506-residue polypeptide: ATP synthase subunit alpha (506 aa).

172-179 is a binding site for ATP; that stretch reads GDRKTGKT.

It belongs to the ATPase alpha/beta chains family. F-type ATPases have 2 components, CF(1) - the catalytic core - and CF(0) - the membrane proton channel. CF(1) has five subunits: alpha(3), beta(3), gamma(1), delta(1), epsilon(1). CF(0) has three main subunits: a(1), b(2) and c(9-12). The alpha and beta chains form an alternating ring which encloses part of the gamma chain. CF(1) is attached to CF(0) by a central stalk formed by the gamma and epsilon chains, while a peripheral stalk is formed by the delta and b chains.

The protein resides in the cell membrane. It catalyses the reaction ATP + H2O + 4 H(+)(in) = ADP + phosphate + 5 H(+)(out). Functionally, produces ATP from ADP in the presence of a proton gradient across the membrane. The alpha chain is a regulatory subunit. In Lactobacillus gasseri (strain ATCC 33323 / DSM 20243 / BCRC 14619 / CIP 102991 / JCM 1131 / KCTC 3163 / NCIMB 11718 / NCTC 13722 / AM63), this protein is ATP synthase subunit alpha.